A 122-amino-acid chain; its full sequence is Holo-[acyl-carrier-protein] synthase (122 aa).

Mg(2+)-binding residues include D8 and E58.

This sequence belongs to the P-Pant transferase superfamily. AcpS family. Mg(2+) is required as a cofactor.

It is found in the cytoplasm. The catalysed reaction is apo-[ACP] + CoA = holo-[ACP] + adenosine 3',5'-bisphosphate + H(+). Its function is as follows. Transfers the 4'-phosphopantetheine moiety from coenzyme A to a Ser of acyl-carrier-protein. This chain is Holo-[acyl-carrier-protein] synthase, found in Levilactobacillus brevis (strain ATCC 367 / BCRC 12310 / CIP 105137 / JCM 1170 / LMG 11437 / NCIMB 947 / NCTC 947) (Lactobacillus brevis).